We begin with the raw amino-acid sequence, 279 residues long: Pleckstrin homology domain-containing family F member 1 (279 aa).

Residues Val35 to Arg131 form the PH domain. The FYVE-type zinc finger occupies Asp152–Ala212. Cys158, Cys161, Cys175, Cys178, Cys183, Cys186, Cys204, and Cys207 together coordinate Zn(2+). Residues Glu218 to Ser264 are disordered. Acidic residues predominate over residues Gly244–Lys253.

As to expression, highly expressed in heart and skeletal muscle. Weakly expressed in brain, thymus, spleen, kidney, liver, small intestine, placenta and lung.

The protein localises to the nucleus. It localises to the cytoplasm. It is found in the perinuclear region. The protein resides in the lysosome. Its function is as follows. May induce apoptosis through the lysosomal-mitochondrial pathway. Translocates to the lysosome initiating the permeabilization of lysosomal membrane (LMP) and resulting in the release of CTSD and CTSL to the cytoplasm. Triggers the caspase-independent apoptosis by altering mitochondrial membrane permeabilization (MMP) resulting in the release of PDCD8. The protein is Pleckstrin homology domain-containing family F member 1 (PLEKHF1) of Homo sapiens (Human).